Reading from the N-terminus, the 328-residue chain is Tetraacyldisaccharide 4'-kinase (328 aa).

52 to 59 (NAGGTGKT) serves as a coordination point for ATP.

The protein belongs to the LpxK family.

It carries out the reaction a lipid A disaccharide + ATP = a lipid IVA + ADP + H(+). It functions in the pathway glycolipid biosynthesis; lipid IV(A) biosynthesis; lipid IV(A) from (3R)-3-hydroxytetradecanoyl-[acyl-carrier-protein] and UDP-N-acetyl-alpha-D-glucosamine: step 6/6. In terms of biological role, transfers the gamma-phosphate of ATP to the 4'-position of a tetraacyldisaccharide 1-phosphate intermediate (termed DS-1-P) to form tetraacyldisaccharide 1,4'-bis-phosphate (lipid IVA). The sequence is that of Tetraacyldisaccharide 4'-kinase from Jannaschia sp. (strain CCS1).